A 231-amino-acid chain; its full sequence is MSDPAIEVAPVPVASPAKAKKEKKPKSDKPKKPKAPRTHPPVSDMIVNAIKTLKERGGSSVQAIKKFLVAQYKVDTDKLSPFIKKYLKSAVEKGQLLQTKGKGASGSFKLPAAAKKEKVVKKVTKKVTEKKPKKAVSKPKTGEKKVKKTIAKKPKVASATKIKKPVAKTTKKPAAAKPTKKVAAKPKAAPKPKAAPKPKVAKPKKAAAPKAKKPAAEKKPKAAKKPSAKKA.

The span at 1 to 17 (MSDPAIEVAPVPVASPA) shows a compositional bias: low complexity. Disordered regions lie at residues 1-44 (MSDP…PVSD) and 124-231 (TKKV…AKKA). One can recognise an H15 domain in the interval 38–112 (THPPVSDMIV…GASGSFKLPA (75 aa)). Composition is skewed to basic residues over residues 145–171 (KVKK…KTTK), 178–213 (PTKK…KAKK), and 221–231 (KAAKKPSAKKA).

The protein belongs to the histone H1/H5 family.

It is found in the nucleus. It localises to the chromosome. Histones H1 are necessary for the condensation of nucleosome chains into higher-order structures. This chain is Histone H1, found in Chironomus thummi thummi (Midge).